The primary structure comprises 1086 residues: Transcription initiation factor TFIID subunit 2 (1086 aa).

Residues 1–11 (MDFSEASTSGD) show a composition bias toward polar residues. Disordered regions lie at residues 1-53 (MDFS…PPPV) and 1064-1086 (GYEAARRSPPRRDFGDETMNLMQ). Composition is skewed to pro residues over residues 19-36 (PFPPKPREGAPPPAPPLA) and 44-53 (APPPLQPPPV). Residues 1067–1078 (AARRSPPRRDFG) are compositionally biased toward basic and acidic residues.

This sequence belongs to the TAF2 family. As to quaternary structure, component of the TFIID basal transcription factor complex, composed of TATA-box-binding protein tbp-1, and a number of TBP-associated factors (TAFs).

The protein localises to the nucleus. In terms of biological role, the TFIID basal transcription factor complex plays a major role in the initiation of RNA polymerase II (Pol II)-dependent transcription. TFIID recognizes and binds promoters via its subunit tbp-1, a TATA-box-binding protein, and promotes assembly of the pre-initiation complex (PIC). The TFIID complex consists of tbp-1 and TBP-associated factors (TAFs), including taf-2. May regulate RNA polymerase II activity and thereby may control transcription initiation by RNA polymerase II. This is Transcription initiation factor TFIID subunit 2 from Caenorhabditis elegans.